The chain runs to 493 residues: Probable NADPH:adrenodoxin oxidoreductase, mitochondrial (493 aa).

FAD is bound by residues S26, E48, L56, and I100. Residues 177–180 (NGNV), 223–224 (RR), and E235 contribute to the NADP(+) site. FAD-binding positions include W407 and 414–416 (GVI). G414 is a binding site for NADP(+).

It belongs to the ferredoxin--NADP reductase type 1 family. It depends on FAD as a cofactor.

It is found in the mitochondrion inner membrane. The catalysed reaction is 2 reduced [adrenodoxin] + NADP(+) + H(+) = 2 oxidized [adrenodoxin] + NADPH. Adrenodoxin reductase transfers electrons from NADPH to adrenodoxin, which is involved in heme A biosynthesis and in iron-sulfur cluster assembly. Involved in the electron transfer to heme A synthase COX15, a heme protein that catalyzes the conversion of heme O to heme A. Required for the de novo synthesis of Fe-S clusters on iron sulfur cluster assembly protein ISU1. Involved in electron delivery for Fe-S cluster synthesis. Essential for coenzyme Q biosynthesis. May be involved in the electron transfer required for the hydroxylation reaction performed by COQ6. May play a role in cellular and mitochondrial iron homeostasis. This is Probable NADPH:adrenodoxin oxidoreductase, mitochondrial from Saccharomyces cerevisiae (strain ATCC 204508 / S288c) (Baker's yeast).